The following is a 533-amino-acid chain: Probable ADP-ribosylation factor-binding protein C25H2.16c (533 aa).

Positions 15–151 (ATEPYAFEPD…LLSYKGYTFP (137 aa)) constitute a VHS domain. One can recognise a GAT domain in the interval 178-305 (REAMSAKLQE…LLTQYDHLLE (128 aa)). Phosphoserine is present on Ser320. Residues 417-532 (NNFTSTCAFE…EYTGQSSIRL (116 aa)) form the GAE domain.

Belongs to the GGA protein family.

Its subcellular location is the golgi apparatus. It localises to the trans-Golgi network. May play a role in the regulation of membrane traffic through the trans-Golgi network. The polypeptide is Probable ADP-ribosylation factor-binding protein C25H2.16c (Schizosaccharomyces pombe (strain 972 / ATCC 24843) (Fission yeast)).